The chain runs to 1385 residues: Formin-like protein 7 (1385 aa).

In terms of domain architecture, Phosphatase tensin-type spans 9 to 193 (FKKPPDGLLL…RYVSMRNVVP (185 aa)). The active-site Phosphocysteine intermediate is C126. The C2 tensin-type domain maps to 199-358 (DRALTLDSVI…KASSTSQGNI (160 aa)). Disordered regions lie at residues 345–367 (IPQR…DGSE), 427–510 (APSR…LTVN), 649–989 (STAA…PLHW), and 1362–1385 (KRAQ…LLEP). 3 stretches are compositionally biased toward polar residues: residues 349-358 (KASSTSQGNI), 448-470 (TSAS…SPVQ), and 483-510 (PAQS…LTVN). 2 stretches are compositionally biased toward pro residues: residues 654–665 (PPLPPPLPPPLK) and 689–701 (TQPP…PPIQ). The span at 702–718 (PTLISNSIYSSTSSVVS) shows a compositional bias: low complexity. Composition is skewed to pro residues over residues 727–758 (PAPP…PPSA), 766–795 (PVPP…PPAA), and 802–815 (AVPP…PPMV). Positions 855 to 867 (QTSSLVSSLPSSR) are enriched in low complexity. 2 stretches are compositionally biased toward pro residues: residues 895-906 (SAPPAPPLPPPK) and 921-932 (WPPPPPPGPPPK). Residues 933-942 (NSSNSLPSKG) are compositionally biased toward low complexity. An FH2 domain is found at 974-1372 (RPNQSSKRTP…RAQMEAEKEK (399 aa)).

It belongs to the formin-like family. Class-II subfamily.

This Oryza sativa subsp. japonica (Rice) protein is Formin-like protein 7 (FH7).